The primary structure comprises 134 residues: MGKDTIANIITYIRNADMNKKGMVQLPFTNITEKIVKILLREGFVENIRKHRENNKYFLVLTLRYRRNRKESSKNFLNLKRISTPGLRIYYNYQQIPRILGGMGIVILSTSRGIMTDREARLEKIGGEVLCYIW.

This sequence belongs to the universal ribosomal protein uS8 family. In terms of assembly, part of the 30S ribosomal subunit.

It localises to the plastid. It is found in the chloroplast. Its function is as follows. One of the primary rRNA binding proteins, it binds directly to 16S rRNA central domain where it helps coordinate assembly of the platform of the 30S subunit. The sequence is that of Small ribosomal subunit protein uS8c (rps8) from Phaseolus angularis (Azuki bean).